The primary structure comprises 128 residues: Flagellar basal body rod protein FlgB (128 aa).

It belongs to the flagella basal body rod proteins family. In terms of assembly, the basal body constitutes a major portion of the flagellar organelle and consists of a number of rings mounted on a central rod. In Gram-negative bacteria, at least four rings, L, P, S and M are present, whereas Gram-positive bacteria lack the L and P rings. The rod consists of about 26 subunits of FlgG in the distal portion, and FlgB, FlgC and FlgF build up the proximal portion of the rod with about 6 subunits each. Rod assembly occurs by export via the flagellum-specific pathway of its constituent proteins and by their incorporation into the rod structure in the probable order of FlgB, FlgC, FlgF and FlgG. Another protein, FliE, also assembles onto the stable rod structure.

Its subcellular location is the bacterial flagellum basal body. Its function is as follows. Structural component of flagellum, the bacterial motility apparatus. Part of the rod structure of flagellar basal body. This chain is Flagellar basal body rod protein FlgB, found in Cereibacter sphaeroides (strain ATCC 17023 / DSM 158 / JCM 6121 / CCUG 31486 / LMG 2827 / NBRC 12203 / NCIMB 8253 / ATH 2.4.1.) (Rhodobacter sphaeroides).